Consider the following 791-residue polypeptide: Outer membrane protein assembly factor BamA (791 aa).

POTRA domains lie at 59-130 (NAIA…VTEK), 131-209 (PRID…VEEG), 212-298 (LYIK…VKEG), 301-383 (YKLG…IRKR), and 386-459 (VYIN…VKEQ).

This sequence belongs to the BamA family. As to quaternary structure, part of the Bam complex.

The protein localises to the cell outer membrane. Functionally, part of the outer membrane protein assembly complex, which is involved in assembly and insertion of beta-barrel proteins into the outer membrane. The sequence is that of Outer membrane protein assembly factor BamA from Nitratidesulfovibrio vulgaris (strain ATCC 29579 / DSM 644 / CCUG 34227 / NCIMB 8303 / VKM B-1760 / Hildenborough) (Desulfovibrio vulgaris).